Reading from the N-terminus, the 191-residue chain is Protein Ves (191 aa).

Belongs to the Ves family.

This chain is Protein Ves, found in Shigella boydii serotype 18 (strain CDC 3083-94 / BS512).